Reading from the N-terminus, the 198-residue chain is MLYPIPIAKLIESYSKLPGIGVKTATRLAFYTIGMSDEDVNDFAKNLLAAKRELTYCSICGNLTDDDPCHICTDSSRDKEIILVVEDSKDVSAMEKIQEYHGYYHVLHGLISPMNGVGPDDINLKSLITRLMAGEATEVIVATNATADGEATAMYISRLLKPAGIKVTRLARGLAVGSDIEYADEVTLLRAIENRTEL.

The segment at 57-72 (CSICGNLTDDDPCHIC) adopts a C4-type zinc-finger fold. In terms of domain architecture, Toprim spans 80 to 175 (EIILVVEDSK…KVTRLARGLA (96 aa)).

It belongs to the RecR family.

In terms of biological role, may play a role in DNA repair. It seems to be involved in an RecBC-independent recombinational process of DNA repair. It may act with RecF and RecO. The sequence is that of Recombination protein RecR from Streptococcus equi subsp. equi (strain 4047).